The chain runs to 128 residues: Histone H2A type 1-H (128 aa).

The segment at 1 to 22 is disordered; it reads MSGRGKQGGKARAKAKTRSSRA. Ser-2 carries the N-acetylserine modification. The residue at position 2 (Ser-2) is a Phosphoserine; by RPS6KA5. Arg-4 carries the post-translational modification Citrulline; alternate. Arg-4 bears the Symmetric dimethylarginine; by PRMT5; alternate mark. N6-(2-hydroxyisobutyryl)lysine; alternate occurs at positions 6 and 10. The residue at position 6 (Lys-6) is an N6-(beta-hydroxybutyryl)lysine; alternate. Positions 7–19 are enriched in basic residues; it reads QGGKARAKAKTRS. Position 10 is an N6-lactoyllysine; alternate (Lys-10). An N6-succinyllysine; alternate modification is found at Lys-10. Glycyl lysine isopeptide (Lys-Gly) (interchain with G-Cter in ubiquitin) cross-links involve residues Lys-14 and Lys-16. N6-(2-hydroxyisobutyryl)lysine; alternate is present on Lys-37. The residue at position 37 (Lys-37) is an N6-(beta-hydroxybutyryl)lysine; alternate. Lys-37 is modified (N6-crotonyllysine; alternate). An N6-(2-hydroxyisobutyryl)lysine mark is found at Lys-75 and Lys-76. Lys-96 carries the post-translational modification N6-(2-hydroxyisobutyryl)lysine; alternate. Residue Lys-96 is modified to N6-succinyllysine; alternate. Residue Lys-96 is modified to N6-glutaryllysine; alternate. At Gln-105 the chain carries N5-methylglutamine. Lys-119 is subject to N6-(2-hydroxyisobutyryl)lysine; alternate. N6-crotonyllysine; alternate occurs at positions 119 and 120. Lys-119 and Lys-120 each carry N6-glutaryllysine; alternate. Lys-120 carries the N6-(beta-hydroxybutyryl)lysine; alternate modification. A Glycyl lysine isopeptide (Lys-Gly) (interchain with G-Cter in ubiquitin); alternate cross-link involves residue Lys-120. Thr-121 is subject to Phosphothreonine; by DCAF1. Position 126 is an N6-(beta-hydroxybutyryl)lysine; alternate (Lys-126). Lys-126 carries the post-translational modification N6-crotonyllysine; alternate. Lys-126 carries the post-translational modification N6-glutaryllysine; alternate.

Belongs to the histone H2A family. As to quaternary structure, the nucleosome is a histone octamer containing two molecules each of H2A, H2B, H3 and H4 assembled in one H3-H4 heterotetramer and two H2A-H2B heterodimers. The octamer wraps approximately 147 bp of DNA. Post-translationally, deiminated on Arg-4 in granulocytes upon calcium entry. Monoubiquitination of Lys-120 (H2AK119Ub) by RING1, TRIM37 and RNF2/RING2 complex gives a specific tag for epigenetic transcriptional repression and participates in X chromosome inactivation of female mammals. It is involved in the initiation of both imprinted and random X inactivation. Ubiquitinated H2A is enriched in inactive X chromosome chromatin. Ubiquitination of H2A functions downstream of methylation of 'Lys-27' of histone H3 (H3K27me). H2AK119Ub by RNF2/RING2 can also be induced by ultraviolet and may be involved in DNA repair. Following DNA double-strand breaks (DSBs), it is ubiquitinated through 'Lys-63' linkage of ubiquitin moieties by the E2 ligase UBE2N and the E3 ligases RNF8 and RNF168, leading to the recruitment of repair proteins to sites of DNA damage. Ubiquitination at Lys-14 and Lys-16 (H2AK13Ub and H2AK15Ub, respectively) in response to DNA damage is initiated by RNF168 that mediates monoubiquitination at these 2 sites, and 'Lys-63'-linked ubiquitin are then conjugated to monoubiquitin; RNF8 is able to extend 'Lys-63'-linked ubiquitin chains in vitro. H2AK119Ub and ionizing radiation-induced 'Lys-63'-linked ubiquitination (H2AK13Ub and H2AK15Ub) are distinct events. In terms of processing, phosphorylation on Ser-2 (H2AS1ph) is enhanced during mitosis. Phosphorylation on Ser-2 by RPS6KA5/MSK1 directly represses transcription. Acetylation of H3 inhibits Ser-2 phosphorylation by RPS6KA5/MSK1. Phosphorylation at Thr-121 (H2AT120ph) by DCAF1 is present in the regulatory region of many tumor suppresor genes and down-regulates their transcription. Post-translationally, symmetric dimethylation on Arg-4 by the PRDM1/PRMT5 complex may play a crucial role in the germ-cell lineage. Glutamine methylation at Gln-105 (H2AQ104me) by FBL is specifically dedicated to polymerase I. It is present at 35S ribosomal DNA locus and impairs binding of the FACT complex. In terms of processing, crotonylation (Kcr) is specifically present in male germ cells and marks testis-specific genes in post-meiotic cells, including X-linked genes that escape sex chromosome inactivation in haploid cells. Crotonylation marks active promoters and enhancers and confers resistance to transcriptional repressors. It is also associated with post-meiotically activated genes on autosomes. Post-translationally, hydroxybutyrylation of histones is induced by starvation. Lactylated in macrophages by EP300/P300 by using lactoyl-CoA directly derived from endogenous or exogenous lactate, leading to stimulates gene transcription.

It is found in the nucleus. It localises to the chromosome. Its function is as follows. Core component of nucleosome. Nucleosomes wrap and compact DNA into chromatin, limiting DNA accessibility to the cellular machineries which require DNA as a template. Histones thereby play a central role in transcription regulation, DNA repair, DNA replication and chromosomal stability. DNA accessibility is regulated via a complex set of post-translational modifications of histones, also called histone code, and nucleosome remodeling. This is Histone H2A type 1-H from Mus musculus (Mouse).